The sequence spans 103 residues: Small ribosomal subunit protein uS10 (103 aa).

The protein belongs to the universal ribosomal protein uS10 family. In terms of assembly, part of the 30S ribosomal subunit.

Functionally, involved in the binding of tRNA to the ribosomes. The sequence is that of Small ribosomal subunit protein uS10 from Vibrio cholerae serotype O1 (strain ATCC 39541 / Classical Ogawa 395 / O395).